We begin with the raw amino-acid sequence, 152 residues long: Ribosomal RNA large subunit methyltransferase H (152 aa).

S-adenosyl-L-methionine is bound by residues leucine 70, glycine 101, and 120–125; that span reads LSDLTF.

The protein belongs to the RNA methyltransferase RlmH family. Homodimer.

The protein resides in the cytoplasm. The catalysed reaction is pseudouridine(1915) in 23S rRNA + S-adenosyl-L-methionine = N(3)-methylpseudouridine(1915) in 23S rRNA + S-adenosyl-L-homocysteine + H(+). Specifically methylates the pseudouridine at position 1915 (m3Psi1915) in 23S rRNA. In Pseudothermotoga lettingae (strain ATCC BAA-301 / DSM 14385 / NBRC 107922 / TMO) (Thermotoga lettingae), this protein is Ribosomal RNA large subunit methyltransferase H.